The chain runs to 184 residues: MSGKLTVITGPMYSGKTTELLSFVEIYKLGKKKVAVFKPKIDSRYHSTMIVSHSGNGVEAHVIERPEEMRKYIEEDTRGVFIDEVQFFSPGLFEVVKDLLDRGIDVFCAGLDLTHKQNPFETTALLLSLADTVIKKKAVCHRCGEYNATLTLKVAGGEEEIDVGGQEKYIAVCRDCYNTLKKRV.

ATP contacts are provided by residues 10–17 (GPMYSGKT) and 83–86 (DEVQ). E84 serves as the catalytic Proton acceptor. Positions 140, 143, 173, and 176 each coordinate Zn(2+).

The protein belongs to the thymidine kinase family. Homotetramer.

Its subcellular location is the cytoplasm. The enzyme catalyses thymidine + ATP = dTMP + ADP + H(+). The polypeptide is Thymidine kinase (Thermotoga sp. (strain RQ2)).